The chain runs to 173 residues: ATP synthase subunit b (173 aa).

Residues 20–40 (IIATLAIFLVLMFLLKKVAWG) traverse the membrane as a helical segment.

It belongs to the ATPase B chain family. In terms of assembly, F-type ATPases have 2 components, F(1) - the catalytic core - and F(0) - the membrane proton channel. F(1) has five subunits: alpha(3), beta(3), gamma(1), delta(1), epsilon(1). F(0) has three main subunits: a(1), b(2) and c(10-14). The alpha and beta chains form an alternating ring which encloses part of the gamma chain. F(1) is attached to F(0) by a central stalk formed by the gamma and epsilon chains, while a peripheral stalk is formed by the delta and b chains.

Its subcellular location is the cell membrane. Its function is as follows. F(1)F(0) ATP synthase produces ATP from ADP in the presence of a proton or sodium gradient. F-type ATPases consist of two structural domains, F(1) containing the extramembraneous catalytic core and F(0) containing the membrane proton channel, linked together by a central stalk and a peripheral stalk. During catalysis, ATP synthesis in the catalytic domain of F(1) is coupled via a rotary mechanism of the central stalk subunits to proton translocation. Component of the F(0) channel, it forms part of the peripheral stalk, linking F(1) to F(0). The chain is ATP synthase subunit b from Lysinibacillus sphaericus (strain C3-41).